Consider the following 132-residue polypeptide: Agouti-signaling protein (132 aa).

Residues 1–22 (MDVTRLLLATLLVFLCFFTAYS) form the signal peptide. Asparagine 39 carries an N-linked (GlcNAc...) asparagine glycan. Positions 62–88 (ISRKEAEKKRSSKKEASMKKVARPRTP) are disordered. Basic and acidic residues predominate over residues 63–79 (SRKEAEKKRSSKKEASM). 5 disulfides stabilise this stretch: cysteine 93–cysteine 108, cysteine 100–cysteine 114, cysteine 107–cysteine 125, cysteine 111–cysteine 132, and cysteine 116–cysteine 123. One can recognise an Agouti domain in the interval 93 to 132 (CVATRDSCKPPAPACCDPCASCQCRFFRSACSCRVLSLNC).

Its subcellular location is the secreted. Involved in the regulation of melanogenesis. The binding of ASP to MC1R precludes alpha-MSH initiated signaling and thus blocks production of cAMP, leading to a down-regulation of eumelanogenesis (brown/black pigment) and thus increasing synthesis of pheomelanin (yellow/red pigment). The chain is Agouti-signaling protein (ASIP) from Macaca radiata (Bonnet macaque).